The following is a 280-amino-acid chain: MRHTLPIAPQFYVTAPQSCPYLEGRLERKLFTALQGEHAQKLNDTLSKQGFRRSQNVLYRPSCAECSACLSARIRVADFEPTRTQRRVMKRNADLRRNATSPWATEDQYALFRRYLDDRHADGGMADMDIFEFAAMIEETPIRSRVIEYSRPGDTPSNRPLSAVCLTDIFDDGLSMVYSFYDPDLAGRSLGAYVILDHIEIAREAGLPYVYLGYWVPGSRKMGYKASYSALEIYKGGRWQDIGQPSDHRAELHPLSVDPIAEQVARISLPEARSGDRSRD.

The protein belongs to the R-transferase family. Bpt subfamily.

The protein localises to the cytoplasm. It carries out the reaction N-terminal L-glutamyl-[protein] + L-leucyl-tRNA(Leu) = N-terminal L-leucyl-L-glutamyl-[protein] + tRNA(Leu) + H(+). The catalysed reaction is N-terminal L-aspartyl-[protein] + L-leucyl-tRNA(Leu) = N-terminal L-leucyl-L-aspartyl-[protein] + tRNA(Leu) + H(+). Its function is as follows. Functions in the N-end rule pathway of protein degradation where it conjugates Leu from its aminoacyl-tRNA to the N-termini of proteins containing an N-terminal aspartate or glutamate. In Cereibacter sphaeroides (strain KD131 / KCTC 12085) (Rhodobacter sphaeroides), this protein is Aspartate/glutamate leucyltransferase.